The primary structure comprises 174 residues: Cell division protein FtsL (174 aa).

The Cytoplasmic segment spans residues 1–38 (MLAAPRELSYIPQPVVSSKQSPRSGLSNRRRESRARQK). A helical transmembrane segment spans residues 39–59 (ILLLGLVLMGFVIGLSLTFLT). The Extracellular segment spans residues 60–174 (MQVLIKGYKI…EPARQAGAGV (115 aa)).

Belongs to the FtsL family.

Its subcellular location is the cell membrane. Essential cell division protein. The protein is Cell division protein FtsL of Moorella thermoacetica (strain ATCC 39073 / JCM 9320).